Reading from the N-terminus, the 399-residue chain is Elongation factor Tu (399 aa).

The tr-type G domain maps to 10–204; it reads KPHVNIGTIG…AVDASIPEPE (195 aa). Residues 19-26 are G1; sequence GHVDHGKT. 19 to 26 is a GTP binding site; the sequence is GHVDHGKT. A Mg(2+)-binding site is contributed by Thr26. A G2 region spans residues 60–64; the sequence is GITIN. The interval 81 to 84 is G3; it reads DCPG. GTP contacts are provided by residues 81 to 85 and 136 to 139; these read DCPGH and NKCD. Positions 136 to 139 are G4; the sequence is NKCD. The G5 stretch occupies residues 174–176; that stretch reads SGL.

This sequence belongs to the TRAFAC class translation factor GTPase superfamily. Classic translation factor GTPase family. EF-Tu/EF-1A subfamily. Monomer.

Its subcellular location is the cytoplasm. It carries out the reaction GTP + H2O = GDP + phosphate + H(+). GTP hydrolase that promotes the GTP-dependent binding of aminoacyl-tRNA to the A-site of ribosomes during protein biosynthesis. The sequence is that of Elongation factor Tu from Prochlorococcus marinus (strain SARG / CCMP1375 / SS120).